The following is a 251-amino-acid chain: Phosphate import ATP-binding protein PstB (251 aa).

The region spanning 5–246 (MNSKDVNFWY…PENKKTEDYI (242 aa)) is the ABC transporter domain. 37 to 44 (GPSGCGKS) is a binding site for ATP.

This sequence belongs to the ABC transporter superfamily. Phosphate importer (TC 3.A.1.7) family. In terms of assembly, the complex is composed of two ATP-binding proteins (PstB), two transmembrane proteins (PstC and PstA) and a solute-binding protein (PstS).

The protein resides in the cell membrane. It catalyses the reaction phosphate(out) + ATP + H2O = ADP + 2 phosphate(in) + H(+). Functionally, part of the ABC transporter complex PstSACB involved in phosphate import. Responsible for energy coupling to the transport system. The chain is Phosphate import ATP-binding protein PstB from Methanococcus maripaludis (strain DSM 14266 / JCM 13030 / NBRC 101832 / S2 / LL).